The following is a 333-amino-acid chain: Adenosine deaminase (333 aa).

2 residues coordinate Zn(2+): H12 and H14. 3 residues coordinate substrate: H14, D16, and G170. Position 197 (H197) interacts with Zn(2+). Catalysis depends on E200, which acts as the Proton donor. Residue D278 participates in Zn(2+) binding. D279 is a substrate binding site.

It belongs to the metallo-dependent hydrolases superfamily. Adenosine and AMP deaminases family. Adenosine deaminase subfamily. The cofactor is Zn(2+).

It carries out the reaction adenosine + H2O + H(+) = inosine + NH4(+). The catalysed reaction is 2'-deoxyadenosine + H2O + H(+) = 2'-deoxyinosine + NH4(+). Its function is as follows. Catalyzes the hydrolytic deamination of adenosine and 2-deoxyadenosine. This is Adenosine deaminase from Klebsiella pneumoniae subsp. pneumoniae (strain ATCC 700721 / MGH 78578).